We begin with the raw amino-acid sequence, 300 residues long: GTPase Era (300 aa).

Residues 4 to 173 enclose the Era-type G domain; it reads KYGIVAIVGK…INTIKQYLHK (170 aa). The interval 12 to 19 is G1; sequence GKPNVGKS. 12 to 19 serves as a coordination point for GTP; sequence GKPNVGKS. A G2 region spans residues 38 to 42; it reads QTTRN. Positions 59-62 are G3; sequence DTPG. Residues 59 to 63 and 122 to 125 each bind GTP; these read DTPGF and SKAE. The tract at residues 122-125 is G4; sequence SKAE. A G5 region spans residues 152–154; the sequence is ISA. One can recognise a KH type-2 domain in the interval 204–282; that stretch reads LNHEVPHGVG…SLTIFVKVEN (79 aa).

The protein belongs to the TRAFAC class TrmE-Era-EngA-EngB-Septin-like GTPase superfamily. Era GTPase family. As to quaternary structure, monomer.

Its subcellular location is the cytoplasm. It localises to the cell membrane. An essential GTPase that binds both GDP and GTP, with rapid nucleotide exchange. Plays a role in 16S rRNA processing and 30S ribosomal subunit biogenesis and possibly also in cell cycle regulation and energy metabolism. The chain is GTPase Era from Ureaplasma urealyticum serovar 10 (strain ATCC 33699 / Western).